We begin with the raw amino-acid sequence, 260 residues long: Endonuclease NucS (260 aa).

It belongs to the NucS endonuclease family.

Its subcellular location is the cytoplasm. Cleaves both 3' and 5' ssDNA extremities of branched DNA structures. The sequence is that of Endonuclease NucS from Methanopyrus kandleri (strain AV19 / DSM 6324 / JCM 9639 / NBRC 100938).